The primary structure comprises 288 residues: Pyridoxal kinase PdxY (288 aa).

Residues Ser-12 and 47–48 (TQ) contribute to the substrate site. ATP-binding positions include Asp-114, Glu-151, Lys-184, and 211–214 (RPLL). Asp-225 contacts substrate.

It belongs to the pyridoxine kinase family. PdxY subfamily. As to quaternary structure, homodimer. The cofactor is Mg(2+).

It catalyses the reaction pyridoxal + ATP = pyridoxal 5'-phosphate + ADP + H(+). It functions in the pathway cofactor metabolism; pyridoxal 5'-phosphate salvage; pyridoxal 5'-phosphate from pyridoxal: step 1/1. Pyridoxal kinase involved in the salvage pathway of pyridoxal 5'-phosphate (PLP). Catalyzes the phosphorylation of pyridoxal to PLP. This is Pyridoxal kinase PdxY from Pseudomonas paraeruginosa (strain DSM 24068 / PA7) (Pseudomonas aeruginosa (strain PA7)).